Here is a 1197-residue protein sequence, read N- to C-terminus: DNA-directed RNA polymerase subunit beta (1197 aa).

It belongs to the RNA polymerase beta chain family. The RNAP catalytic core consists of 2 alpha, 1 beta, 1 beta' and 1 omega subunit. When a sigma factor is associated with the core the holoenzyme is formed, which can initiate transcription.

The catalysed reaction is RNA(n) + a ribonucleoside 5'-triphosphate = RNA(n+1) + diphosphate. DNA-dependent RNA polymerase catalyzes the transcription of DNA into RNA using the four ribonucleoside triphosphates as substrates. This is DNA-directed RNA polymerase subunit beta from Streptococcus pyogenes serotype M12 (strain MGAS9429).